The chain runs to 385 residues: Na(+)/H(+) antiporter NhaA (385 aa).

Transmembrane regions (helical) follow at residues 9–29 (YSAI…NVLD), 45–65 (IFGL…VFFF), 87–107 (IIPG…YLSV), 114–134 (GWPV…AIFG), 155–175 (AGIV…WIIV), 198–218 (TFLI…SVYQ), 220–235 (GIHA…IMLN), 245–265 (ALEP…AAMV), 282–302 (ILLG…IIAL), 312–332 (FFNL…SLLM), and 345–365 (QGVI…IILM).

It belongs to the NhaA Na(+)/H(+) (TC 2.A.33) antiporter family.

The protein localises to the cell membrane. The catalysed reaction is Na(+)(in) + 2 H(+)(out) = Na(+)(out) + 2 H(+)(in). Functionally, na(+)/H(+) antiporter that extrudes sodium in exchange for external protons. This Tropheryma whipplei (strain Twist) (Whipple's bacillus) protein is Na(+)/H(+) antiporter NhaA.